Here is a 291-residue protein sequence, read N- to C-terminus: 6-deoxy-6-sulfogluconolactonase (291 aa).

A divalent metal cation contacts are provided by Glu-17, Asn-148, and Asp-198. Residue Asp-198 is the Proton donor/acceptor of the active site.

It belongs to the SMP-30/CGR1 family. It depends on a divalent metal cation as a cofactor.

It carries out the reaction 6-deoxy-6-sulfo-D-glucono-1,5-lactone + H2O = 6-deoxy-6-sulfo-D-gluconate + H(+). Functionally, catalyzes the hydrolysis of 6-deoxy-6-sulfo-D-glucono-1,5-lactone to form 6-deoxy-6-sulfo-D-gluconate. Is involved in a degradation pathway of sulfoquinovose (SQ) that allows P.putida SQ1 to use SQ as the sole carbon and energy source for growth. This is 6-deoxy-6-sulfogluconolactonase from Pseudomonas putida (Arthrobacter siderocapsulatus).